A 202-amino-acid chain; its full sequence is Imidazoleglycerol-phosphate dehydratase (202 aa).

The protein belongs to the imidazoleglycerol-phosphate dehydratase family.

The protein resides in the cytoplasm. The catalysed reaction is D-erythro-1-(imidazol-4-yl)glycerol 3-phosphate = 3-(imidazol-4-yl)-2-oxopropyl phosphate + H2O. The protein operates within amino-acid biosynthesis; L-histidine biosynthesis; L-histidine from 5-phospho-alpha-D-ribose 1-diphosphate: step 6/9. The protein is Imidazoleglycerol-phosphate dehydratase of Lactococcus lactis subsp. cremoris (strain SK11).